Consider the following 179-residue polypeptide: MNRLQEKYKSDIVKAMMDKFNYDSVMQVPKIEKIVINMGVGDAVSNSKALDMAVEELTILSGQKPLVTKAKKSIAGFKLREGMPIGAKVTLRGERMYDFLDKLVTVSLPRVRDFRGVSKKAFDGRGNYTLGVKEQLIFPEIDYDKVSKVRGMDIVVVTTANTDEEARELLTLLGMPFQK.

Belongs to the universal ribosomal protein uL5 family. In terms of assembly, part of the 50S ribosomal subunit; part of the 5S rRNA/L5/L18/L25 subcomplex. Contacts the 5S rRNA and the P site tRNA. Forms a bridge to the 30S subunit in the 70S ribosome.

Functionally, this is one of the proteins that bind and probably mediate the attachment of the 5S RNA into the large ribosomal subunit, where it forms part of the central protuberance. In the 70S ribosome it contacts protein S13 of the 30S subunit (bridge B1b), connecting the 2 subunits; this bridge is implicated in subunit movement. Contacts the P site tRNA; the 5S rRNA and some of its associated proteins might help stabilize positioning of ribosome-bound tRNAs. This is Large ribosomal subunit protein uL5 from Exiguobacterium sp. (strain ATCC BAA-1283 / AT1b).